An 887-amino-acid polypeptide reads, in one-letter code: Translation initiation factor IF-2 (887 aa).

3 disordered regions span residues 31–87 (KLAQ…PRRI), 94–113 (SFVSEDLNSPQPPVPVDSDA), and 129–285 (VETE…KWRK). Over residues 42-59 (SSSEKPSTKVPEKIAKEK) the composition is skewed to basic and acidic residues. Composition is skewed to basic and acidic residues over residues 150 to 171 (VVAKEPPAPKKEPEVVVKKEPP) and 199 to 212 (PKKEDKPAPKEKTK). Over residues 213 to 223 (TTQTKPQQSSD) the composition is skewed to low complexity. A compositionally biased stretch (basic and acidic residues) spans 241 to 273 (YRRDVSKKSGSDFRDRAKKDDNPKAFTGRDRYG). A tr-type G domain is found at 393–562 (TRPPIVAFMG…ALQAEVLELK (170 aa)). The interval 402–409 (GHVDHGKT) is G1. Position 402–409 (402–409 (GHVDHGKT)) interacts with GTP. The tract at residues 427–431 (AITQH) is G2. The interval 448–451 (DTPG) is G3. GTP is bound by residues 448–452 (DTPGH) and 502–505 (NKCD). Positions 502 to 505 (NKCD) are G4. Residues 538-540 (SAK) form a G5 region.

Belongs to the TRAFAC class translation factor GTPase superfamily. Classic translation factor GTPase family. IF-2 subfamily.

The protein localises to the cytoplasm. One of the essential components for the initiation of protein synthesis. Protects formylmethionyl-tRNA from spontaneous hydrolysis and promotes its binding to the 30S ribosomal subunits. Also involved in the hydrolysis of GTP during the formation of the 70S ribosomal complex. The polypeptide is Translation initiation factor IF-2 (Chlamydia caviae (strain ATCC VR-813 / DSM 19441 / 03DC25 / GPIC) (Chlamydophila caviae)).